The primary structure comprises 402 residues: Protein FAM53A (402 aa).

At serine 119 the chain carries Phosphoserine. The segment at leucine 170 to serine 215 is disordered. The Nuclear localization signal motif lies at arginine 273 to arginine 281. 2 positions are modified to phosphoserine: serine 306 and serine 309. Over residues threonine 323–glycine 333 the composition is skewed to polar residues. A disordered region spans residues threonine 323–asparagine 402. Residues glycine 336 to arginine 345 are compositionally biased toward low complexity.

Belongs to the FAM53 family.

It localises to the nucleus. Its function is as follows. May play an important role in neural development; the dorsomedial roof of the third ventricle. This is Protein FAM53A from Mus musculus (Mouse).